Reading from the N-terminus, the 239-residue chain is 1-(5-phosphoribosyl)-5-[(5-phosphoribosylamino)methylideneamino] imidazole-4-carboxamide isomerase (239 aa).

The active-site Proton acceptor is the D9. The active-site Proton donor is D131.

This sequence belongs to the HisA/HisF family.

The protein localises to the cytoplasm. The enzyme catalyses 1-(5-phospho-beta-D-ribosyl)-5-[(5-phospho-beta-D-ribosylamino)methylideneamino]imidazole-4-carboxamide = 5-[(5-phospho-1-deoxy-D-ribulos-1-ylimino)methylamino]-1-(5-phospho-beta-D-ribosyl)imidazole-4-carboxamide. It participates in amino-acid biosynthesis; L-histidine biosynthesis; L-histidine from 5-phospho-alpha-D-ribose 1-diphosphate: step 4/9. The polypeptide is 1-(5-phosphoribosyl)-5-[(5-phosphoribosylamino)methylideneamino] imidazole-4-carboxamide isomerase (Parabacteroides distasonis (strain ATCC 8503 / DSM 20701 / CIP 104284 / JCM 5825 / NCTC 11152)).